We begin with the raw amino-acid sequence, 223 residues long: Transcription factor bHLH75 (223 aa).

A disordered region spans residues 58-100; it reads FPNLLHGNTRRKGNKEESGSKRRRKRSEEEEAMNGDETQKPKD. One can recognise a bHLH domain in the interval 110-160; that stretch reads QATDSHSLAERVRREKINERLKCLQDLVPGCYKAMGMAVMLDVIIDYVRSL.

Homodimer. In terms of tissue distribution, expressed in leaves, stems, and flowers.

The protein localises to the nucleus. The protein is Transcription factor bHLH75 (BHLH75) of Arabidopsis thaliana (Mouse-ear cress).